Here is a 63-residue protein sequence, read N- to C-terminus: Race-specific elicitor A9 (63 aa).

The first 23 residues, 1 to 23 (MKLSLLSVELALLIATTLPLCWA), serve as a signal peptide directing secretion. Positions 24 to 35 (AALPVGLGVGLD) are excised as a propeptide. 3 cysteine pairs are disulfide-bonded: Cys-37/Cys-51, Cys-41/Cys-54, and Cys-47/Cys-61.

This necrosis-inducing peptide induces a hypersensitive response on Cf-9 tomato genotypes. Race-specific elicitors are compounds which only induce defense responses in genotypes of host plants which are resistant to the pathogenic race that produces the elicitor, but not in susceptible genotypes. The protein is Race-specific elicitor A9 (AVR9) of Passalora fulva (Tomato leaf mold).